An 828-amino-acid chain; its full sequence is MPSALAIFTCRPNSHPFQERHVYLDEPIKIGRSVARCRPAQNNATFDCKVLSRNHALVWFDHKTGKFYLQDTKSSNGTFINSQRLSRGSEESPPCEILSGDIIQFGVDVTENTRKVTHGCIVSTIKLFLPDGMEARLRSDVIHAPLPSPVDKVAANTPSMYSQELFQLSQYLQEALHREQMLEQKLATLQRLLAITQEASDTSWQALIDEDRLLSRLEVMGNQLQACSKNQTEDSLRKELIALQEDKHNYETTAKESLRRVLQEKIEVVRKLSEVERSLSNTEDECTHLKEMNERTQEELRELANKYNGAVNEIKDLSDKLKVAEGKQEEIQQKGQAEKKELQHKIDEMEEKEQELQAKIEALQADNDFTNERLTALQVRLEHLQEKTLKECSSLEHLLSKSGGDCTFIHQFIECQKKLIVEGHLTKAVEETKLSKENQTRAKESDFSDTLSPSKEKSSDDTTDAQMDEQDLNEPLAKVSLLKDDLQGAQSEIEAKQEIQHLRKELIEAQELARTSKQKCFELQALLEEERKAYRNQVEESTKQIQVLQAQLQRLHIDTENLREEKDSEITSTRDELLSARDEILLLHQAAAKVASERDTDIASLQEELKKVRAELERWRKAASEYEKEITSLQNSFQLRCQQCEDQQREEATRLQGELEKLRKEWNALETECHSLKRENVLLSSELQRQEKELHNSQKQSLELTSDLSILQMSRKELENQVGSLKEQHLRDSADLKTLLSKAENQAKDVQKEYEKTQTVLSELKLKFEMTEQEKQSITDELKQCKNNLKLLREKGNNKPWPWMPMLAALVAVTAIVLYVPGLARASP.

The interval 1–163 (MPSALAIFTC…AANTPSMYSQ (163 aa)) is necessary for targeting to centrosomes. At 1–802 (MPSALAIFTC…REKGNNKPWP (802 aa)) the chain is on the cytoplasmic side. Positions 28-85 (IKIGRSVARCRPAQNNATFDCKVLSRNHALVWFDHKTGKFYLQDTKSSNGTFINSQRL) constitute an FHA domain. S148 is modified (phosphoserine). Coiled coils occupy residues 167-202 (QLSQYLQEALHREQMLEQKLATLQRLLAITQEASDT) and 230-388 (NQTE…QEKT). Residues 339 to 359 (KKELQHKIDEMEEKEQELQAK) form a helical; Anchor for type IV membrane protein membrane-spanning segment. Basic and acidic residues predominate over residues 433–446 (KLSKENQTRAKESD). The interval 433–467 (KLSKENQTRAKESDFSDTLSPSKEKSSDDTTDAQM) is disordered. A phosphoserine mark is found at S448 and S452. Positions 477-799 (AKVSLLKDDL…KLLREKGNNK (323 aa)) form a coiled coil. Residues 803 to 823 (WMPMLAALVAVTAIVLYVPGL) form a helical; Anchor for type IV membrane protein membrane-spanning segment. The Extracellular segment spans residues 824-828 (ARASP).

The protein belongs to the SLMAP family. Homodimer. Interacts with myosin. Interacts with SIKE1 and both associate with the STRIPAK core complex composed of PP2A catalytic and scaffolding subunits, the striatins (PP2A regulatory subunits), the striatin-associated proteins MOB4, STRIP1 and STRIP2, PDCD10 and members of the STE20 kinases, such as STK24 and STK26. Interacts (via FHA domain) with STK3 (when phosphorylated); the interaction associates STK3 with the STRIPAK complex.

Its subcellular location is the cell membrane. The protein localises to the sarcolemma. The protein resides in the cytoplasm. It localises to the myofibril. It is found in the sarcomere. Its subcellular location is the m line. The protein localises to the z line. The protein resides in the cytoskeleton. It localises to the microtubule organizing center. It is found in the centrosome. Its subcellular location is the endoplasmic reticulum membrane. The protein localises to the mitochondrion membrane. In terms of biological role, associates with the striatin-interacting phosphatase and kinase (STRIPAK) core complex, forming the extended (SIKE1:SLMAP)STRIPAK complex. The (SIKE1:SLMAP)STRIPAK complex dephosphorylates STK3 leading to the inhibition of Hippo signaling and the control of cell growth. May play a role during myoblast fusion. The chain is Sarcolemmal membrane-associated protein from Homo sapiens (Human).